The primary structure comprises 351 residues: Glycerol-3-phosphate dehydrogenase 1-like protein (351 aa).

Residue 11 to 16 coordinates NAD(+); sequence GSGNWG. Residue Lys-121 participates in substrate binding. Ala-154 provides a ligand contact to NAD(+). Catalysis depends on Lys-205, which acts as the Proton acceptor. Residues Arg-271, Lys-298, and Gln-300 each coordinate NAD(+). 271 to 272 provides a ligand contact to substrate; it reads RN.

It belongs to the NAD-dependent glycerol-3-phosphate dehydrogenase family.

The protein resides in the cytoplasm. The catalysed reaction is sn-glycerol 3-phosphate + NAD(+) = dihydroxyacetone phosphate + NADH + H(+). In terms of biological role, plays a role in regulating cardiac sodium current. The polypeptide is Glycerol-3-phosphate dehydrogenase 1-like protein (gpd1l) (Danio rerio (Zebrafish)).